Consider the following 126-residue polypeptide: Holo-[acyl-carrier-protein] synthase (126 aa).

2 residues coordinate Mg(2+): Asp8 and Glu59.

Belongs to the P-Pant transferase superfamily. AcpS family. The cofactor is Mg(2+).

Its subcellular location is the cytoplasm. It carries out the reaction apo-[ACP] + CoA = holo-[ACP] + adenosine 3',5'-bisphosphate + H(+). Its function is as follows. Transfers the 4'-phosphopantetheine moiety from coenzyme A to a Ser of acyl-carrier-protein. In Rickettsia prowazekii (strain Madrid E), this protein is Holo-[acyl-carrier-protein] synthase.